Here is a 477-residue protein sequence, read N- to C-terminus: Bifunctional protein HldE (477 aa).

A ribokinase region spans residues 1–318; the sequence is MQIQLPMFQN…RRAVQQEQGA (318 aa). 195–198 lines the ATP pocket; sequence NLSE. Asp-264 is an active-site residue. The segment at 344–477 is cytidylyltransferase; it reads FTNGCFDIIH…VEKIRKDQVK (134 aa).

This sequence in the N-terminal section; belongs to the carbohydrate kinase PfkB family. In the C-terminal section; belongs to the cytidylyltransferase family. As to quaternary structure, homodimer.

It catalyses the reaction D-glycero-beta-D-manno-heptose 7-phosphate + ATP = D-glycero-beta-D-manno-heptose 1,7-bisphosphate + ADP + H(+). It carries out the reaction D-glycero-beta-D-manno-heptose 1-phosphate + ATP + H(+) = ADP-D-glycero-beta-D-manno-heptose + diphosphate. It participates in nucleotide-sugar biosynthesis; ADP-L-glycero-beta-D-manno-heptose biosynthesis; ADP-L-glycero-beta-D-manno-heptose from D-glycero-beta-D-manno-heptose 7-phosphate: step 1/4. It functions in the pathway nucleotide-sugar biosynthesis; ADP-L-glycero-beta-D-manno-heptose biosynthesis; ADP-L-glycero-beta-D-manno-heptose from D-glycero-beta-D-manno-heptose 7-phosphate: step 3/4. Functionally, catalyzes the phosphorylation of D-glycero-D-manno-heptose 7-phosphate at the C-1 position to selectively form D-glycero-beta-D-manno-heptose-1,7-bisphosphate. Its function is as follows. Catalyzes the ADP transfer from ATP to D-glycero-beta-D-manno-heptose 1-phosphate, yielding ADP-D-glycero-beta-D-manno-heptose. The sequence is that of Bifunctional protein HldE from Hahella chejuensis (strain KCTC 2396).